Reading from the N-terminus, the 690-residue chain is Elongation factor G (690 aa).

Residues glutamate 8–leucine 283 form the tr-type G domain. GTP-binding positions include alanine 17 to threonine 24, aspartate 81 to histidine 85, and asparagine 135 to aspartate 138.

This sequence belongs to the TRAFAC class translation factor GTPase superfamily. Classic translation factor GTPase family. EF-G/EF-2 subfamily.

It localises to the cytoplasm. Functionally, catalyzes the GTP-dependent ribosomal translocation step during translation elongation. During this step, the ribosome changes from the pre-translocational (PRE) to the post-translocational (POST) state as the newly formed A-site-bound peptidyl-tRNA and P-site-bound deacylated tRNA move to the P and E sites, respectively. Catalyzes the coordinated movement of the two tRNA molecules, the mRNA and conformational changes in the ribosome. This chain is Elongation factor G, found in Nitrobacter hamburgensis (strain DSM 10229 / NCIMB 13809 / X14).